A 728-amino-acid polypeptide reads, in one-letter code: Beta-porphyranase A (728 aa).

The signal sequence occupies residues 1-22 (MSYKYIFLLSAFTLGVPPGIYC). The substrate site is built by His53, Lys76, Trp78, Lys87, His114, and Asn151. Glu152 serves as the catalytic Proton donor. Residues His235, Glu279, Ser326, and Trp331 each coordinate substrate. The active-site Nucleophile is the Glu279. In terms of domain architecture, CBM-cenC spans 599 to 701 (TLQNGTFSEG…AVSFDFNSTV (103 aa)).

The protein belongs to the glycosyl hydrolase 86 family.

The catalysed reaction is Hydrolysis of beta-D-galactopyranose-(1-&gt;4)-alpha-L-galactopyranose-6-sulfate linkages in porphyran.. In terms of biological role, cleaves the sulfated polysaccharide porphyran at the (1-&gt;4) linkages between beta-D-galactopyranose and alpha-L-galactopyranose-6-sulfate, forming mostly the disaccharide alpha-L-galactopyranose-6-sulfate-(1-&gt;3)-beta-D-galactose. Some longer oligosaccharides of even number of residues are also observed. Inactive on the non-sulfated agarose portion of the porphyran backbone. Can also use methylated galactoses. This Phocaeicola plebeius (strain DSM 17135 / JCM 12973 / CCUG 54634 / M2) (Bacteroides plebeius) protein is Beta-porphyranase A.